A 171-amino-acid chain; its full sequence is Group 1 truncated hemoglobin LI410 (171 aa).

The N-terminal 23 residues, 1–23 (MMRTVQLRTLRPCIRAQQQPVRA), are a transit peptide targeting the chloroplast. Positions 63 and 111 each coordinate heme.

It belongs to the truncated hemoglobin family. Group I subfamily. The cofactor is heme.

It localises to the plastid. The protein localises to the chloroplast. The polypeptide is Group 1 truncated hemoglobin LI410 (LI410) (Chlamydomonas moewusii (Chlamydomonas eugametos)).